Here is a 299-residue protein sequence, read N- to C-terminus: Lysine exporter LysO (299 aa).

A run of 8 helical transmembrane segments spans residues 1–21 (MFSG…IPLR), 31–51 (QLLS…LAFL), 58–78 (LLAI…CNIA), 109–129 (LKLC…LAFL), 131–151 (HATE…GIQL), 169–189 (IVAV…AFIL), 207–227 (SLSG…AAFF), and 277–297 (PAAI…IAFF).

This sequence belongs to the LysO family.

It localises to the cell inner membrane. Functionally, mediates export of lysine. In Escherichia coli (strain K12), this protein is Lysine exporter LysO.